Consider the following 113-residue polypeptide: Nucleoid-associated protein CLH_3225 (113 aa).

The span at methionine 1 to asparagine 14 shows a compositional bias: gly residues. A disordered region spans residues methionine 1–aspartate 31.

Belongs to the YbaB/EbfC family. Homodimer.

It localises to the cytoplasm. Its subcellular location is the nucleoid. Functionally, binds to DNA and alters its conformation. May be involved in regulation of gene expression, nucleoid organization and DNA protection. This chain is Nucleoid-associated protein CLH_3225, found in Clostridium botulinum (strain Alaska E43 / Type E3).